Reading from the N-terminus, the 274-residue chain is Diaminopimelate epimerase (274 aa).

Asparagine 11 and asparagine 60 together coordinate substrate. The Proton donor role is filled by cysteine 69. Substrate contacts are provided by residues 70–71 (GN), asparagine 191, and 209–210 (ER). Cysteine 218 serves as the catalytic Proton acceptor. 219–220 (GS) is a binding site for substrate.

Belongs to the diaminopimelate epimerase family. In terms of assembly, homodimer.

The protein resides in the cytoplasm. It carries out the reaction (2S,6S)-2,6-diaminopimelate = meso-2,6-diaminopimelate. It participates in amino-acid biosynthesis; L-lysine biosynthesis via DAP pathway; DL-2,6-diaminopimelate from LL-2,6-diaminopimelate: step 1/1. Functionally, catalyzes the stereoinversion of LL-2,6-diaminopimelate (L,L-DAP) to meso-diaminopimelate (meso-DAP), a precursor of L-lysine and an essential component of the bacterial peptidoglycan. The chain is Diaminopimelate epimerase from Caldanaerobacter subterraneus subsp. tengcongensis (strain DSM 15242 / JCM 11007 / NBRC 100824 / MB4) (Thermoanaerobacter tengcongensis).